A 344-amino-acid polypeptide reads, in one-letter code: MTLAELLGRSRIAQVANNHKPLTYTGKKFHPTHQIIETKPSTLYRQEWGLKSAIPSKIKSRYLVYNDLDTLERITTFEPRGGTQWNRLRFQEMGVPIVSNIGRQNPFFKYISRPEDESHAKLSLFKEMKGDTDISPAAMKKRLKKITALIRSFQDEFKEWLVENHPDELKLNSNKLEDYVVKFLNKKLETKTNKKFNTEIIGTGGLSYSLPGKLKNSPNGVIQRTVVPGRILNVVKENNDNKWLAAIGGFVADVVFFQSPPSSFNSMGDFIRMKTFLFEILEASMEKNGSVSMHARLLEPQNDKTREFFNKRPIYKPLTSRRARRPSVGNIQEANNLLNIIKGN.

S327 carries the phosphoserine modification.

The protein belongs to the bacterial ribosomal protein bS1 family. As to quaternary structure, component of the mitochondrial small ribosomal subunit (mt-SSU). Mature yeast 74S mitochondrial ribosomes consist of a small (37S) and a large (54S) subunit. The 37S small subunit contains a 15S ribosomal RNA (15S mt-rRNA) and 34 different proteins. The 54S large subunit contains a 21S rRNA (21S mt-rRNA) and 46 different proteins.

It localises to the mitochondrion. Functionally, component of the mitochondrial ribosome (mitoribosome), a dedicated translation machinery responsible for the synthesis of mitochondrial genome-encoded proteins, including at least some of the essential transmembrane subunits of the mitochondrial respiratory chain. The mitoribosomes are attached to the mitochondrial inner membrane and translation products are cotranslationally integrated into the membrane. bS1m functionally interacts with the 5'-UTR of mitochondrial mRNAs. This chain is Small ribosomal subunit protein bS1m (MRP51), found in Saccharomyces cerevisiae (strain ATCC 204508 / S288c) (Baker's yeast).